Here is an 830-residue protein sequence, read N- to C-terminus: Heavy metal tolerance protein (830 aa).

The signal sequence occupies residues 1–27 (MVLRYNSPRLNILELVLLYVGFFSIGS). The next 3 membrane-spanning stretches (helical) occupy residues 51-71 (PIGIISWWILGIALTYVVDIS), 88-108 (TTVVCLILFLLFWIIVLISCA), and 126-146 (LSVLYVWAIDIVFETIFIVYS). Residue N150 is glycosylated (N-linked (GlcNAc...) asparagine). Transmembrane regions (helical) follow at residues 156 to 176 (IVLADHVARLVLCVFATAIYL), 263 to 283 (FQIFICIVLLFLGRAVNILAP), and 304 to 324 (DVILFVIYRFLQGNMGVIGSL). The 286-residue stretch at 265–550 (IFICIVLLFL…FGTLYRSLQN (286 aa)) folds into the ABC transmembrane type-1 domain. Residue N350 is glycosylated (N-linked (GlcNAc...) asparagine). 2 consecutive transmembrane segments (helical) span residues 381–401 (VVFQIGPVLLDLGVAMVYFFI) and 403–423 (FDIYFTLIVLIMTLCYCYVTV). Glutathione is bound by residues 429–433 (RTEAR), 492–495 (NIVQ), and G542. Residues 490 to 511 (FLNIVQGGIFTFSLAIACLLSA) traverse the membrane as a helical segment. The ABC transporter domain maps to 584 to 818 (VIFSHVSFAY…DGGAYKKMWF (235 aa)). ATP is bound by residues Y593 and 617 to 628 (GESGGGKSTIMR).

It belongs to the ABC transporter superfamily. ABCB family. Heavy Metal importer (TC 3.A.1.210) subfamily.

It localises to the vacuole membrane. Functionally, involved in metal tolerance. Probably involved in the transport of metal-bound phytochelatins. Compartmentalizes cadmium within vacuoles, thereby protecting cells from cadmium toxicity. The sequence is that of Heavy metal tolerance protein (hmt1) from Schizosaccharomyces pombe (strain 972 / ATCC 24843) (Fission yeast).